A 142-amino-acid chain; its full sequence is MADKFDANDETRTVYAVVYDNDQPVSTGQFLAETKIEARLTRIVTLADYCGCGYGAKVTEALETYTRREGFYQLTIHSELTAQTFYENLGYQTYGPKCLEDGEYCQSLAKTILKWEKNMDIAMLIAIVGGLLGCYLYLTKNN.

One can recognise an N-acetyltransferase domain in the interval 1–120 (MADKFDANDE…TILKWEKNMD (120 aa)).

The protein belongs to the acetyltransferase family.

This is an uncharacterized protein from Streptococcus pyogenes serotype M3 (strain ATCC BAA-595 / MGAS315).